The primary structure comprises 603 residues: Aspartate--tRNA(Asp/Asn) ligase (603 aa).

Glu-182 lines the L-aspartate pocket. The aspartate stretch occupies residues 206–209 (QLFK). Arg-228 contributes to the L-aspartate binding site. Residues 228–230 (RDE) and Gln-237 contribute to the ATP site. His-454 contacts L-aspartate. Glu-500 contacts ATP. Arg-507 provides a ligand contact to L-aspartate. 552 to 555 (GLDR) serves as a coordination point for ATP.

This sequence belongs to the class-II aminoacyl-tRNA synthetase family. Type 1 subfamily. In terms of assembly, homodimer.

The protein localises to the cytoplasm. It catalyses the reaction tRNA(Asx) + L-aspartate + ATP = L-aspartyl-tRNA(Asx) + AMP + diphosphate. Aspartyl-tRNA synthetase with relaxed tRNA specificity since it is able to aspartylate not only its cognate tRNA(Asp) but also tRNA(Asn). Reaction proceeds in two steps: L-aspartate is first activated by ATP to form Asp-AMP and then transferred to the acceptor end of tRNA(Asp/Asn). The sequence is that of Aspartate--tRNA(Asp/Asn) ligase from Aquifex aeolicus (strain VF5).